Consider the following 1173-residue polypeptide: WASH complex subunit 4 (1173 aa).

Ala2 bears the N-acetylalanine mark. Position 7 is a phosphoserine (Ser7). The tract at residues 705–1173 is sufficient for interaction with WASHC5; the sequence is KDLALFFSLN…STVSADPVVK (469 aa). Residues 1135-1161 adopt a coiled-coil conformation; the sequence is RADKTAAEENQEKKEKEEETKTSNGDL. Over residues 1142–1155 the composition is skewed to basic and acidic residues; the sequence is EENQEKKEKEEETK. The disordered stretch occupies residues 1142–1173; that stretch reads EENQEKKEKEEETKTSNGDLSDSTVSADPVVK. At Thr1154 the chain carries Phosphothreonine. The span at 1157-1167 shows a compositional bias: polar residues; the sequence is SNGDLSDSTVS.

This sequence belongs to the SWIP family. In terms of assembly, component of the WASH core complex also described as WASH regulatory complex (SHRC) composed of WASH (WASHC1, WASH2P or WASH3P), WASHC2 (WASHC2A or WASHC2C), WASHC3, WASHC4 and WASHC5. The WASH core complex associates via WASHC2 with the F-actin-capping protein dimer (formed by CAPZA1, CAPZA2 or CAPZA3 and CAPZB) in a transient or substoichiometric manner which was initially described as WASH complex.

It localises to the early endosome. Functionally, acts as a component of the WASH core complex that functions as a nucleation-promoting factor (NPF) at the surface of endosomes, where it recruits and activates the Arp2/3 complex to induce actin polymerization, playing a key role in the fission of tubules that serve as transport intermediates during endosome sorting. The sequence is that of WASH complex subunit 4 from Homo sapiens (Human).